Here is a 658-residue protein sequence, read N- to C-terminus: UvrABC system protein B (658 aa).

In terms of domain architecture, Helicase ATP-binding spans 25 to 182; that stretch reads DSIRSGNKFN…LKLVDMGYKR (158 aa). 38–45 is an ATP binding site; it reads GVTGSGKT. A Beta-hairpin motif is present at residues 91-114; sequence YYDYYQPEAYIPRQDLFIEKDSSI. The region spanning 433–596 is the Helicase C-terminal domain; the sequence is QVEVLFDRAK…TPRSASRNLE (164 aa). Positions 623 to 658 constitute a UVR domain; that stretch reads AKIVKELRKQMLEAAKNLEFEKAAALRDEIAKLREL.

It belongs to the UvrB family. Forms a heterotetramer with UvrA during the search for lesions. Interacts with UvrC in an incision complex.

The protein localises to the cytoplasm. In terms of biological role, the UvrABC repair system catalyzes the recognition and processing of DNA lesions. A damage recognition complex composed of 2 UvrA and 2 UvrB subunits scans DNA for abnormalities. Upon binding of the UvrA(2)B(2) complex to a putative damaged site, the DNA wraps around one UvrB monomer. DNA wrap is dependent on ATP binding by UvrB and probably causes local melting of the DNA helix, facilitating insertion of UvrB beta-hairpin between the DNA strands. Then UvrB probes one DNA strand for the presence of a lesion. If a lesion is found the UvrA subunits dissociate and the UvrB-DNA preincision complex is formed. This complex is subsequently bound by UvrC and the second UvrB is released. If no lesion is found, the DNA wraps around the other UvrB subunit that will check the other stand for damage. The chain is UvrABC system protein B from Campylobacter fetus subsp. fetus (strain 82-40).